Here is a 1061-residue protein sequence, read N- to C-terminus: Zinc finger protein ZFPM1 (1061 aa).

The CCHC FOG-type 1 zinc finger occupies 152–185 (VVNKDVFPCKDCGIWYRSERNLQAHLMYYCASRQ). Residues Cys160, Cys163, His176, and Cys181 each coordinate Zn(2+). C2H2-type zinc fingers lie at residues 204–228 (RICPFPQCKKSCPSTSSLEIHMRSH), 234–256 (FVCLICLSAFTTKANCERHLKVH), and 262–285 (GVCHGCGFISTTRDILYSHLVTNH). Disordered regions lie at residues 349-393 (PSAT…SEET) and 435-455 (TEMSSPTPGSSPVPNETGAAT). Residues 378–388 (SPISSSSSASS) show a composition bias toward low complexity. Residues 436-448 (EMSSPTPGSSPVP) are compositionally biased toward polar residues. The segment at 508–541 (SAVPKGATCFECEITFNNINNYYVHKRLYCSGRH) adopts a CCHC FOG-type 2 zinc-finger fold. 4 residues coordinate Zn(2+): Cys516, Cys519, His532, and Cys537. Disordered regions lie at residues 561–586 (ALASGFSSTEQEASPPQEDAGEESSA) and 599–630 (MDCEGAGSGHVSEGSQSPSSLDDPEEDPNRTV). The span at 565-574 (GFSSTEQEAS) shows a compositional bias: polar residues. A CCHC FOG-type 3 zinc finger spans residues 623–656 (EEDPNRTVCGACNIRFSRHETYVVHKRYYCASRH). Zn(2+) contacts are provided by Cys631, Cys634, His647, and Cys652. Positions 661 to 681 (RRREVNKPGPPYTTQPTPRTR) are disordered. The segment at 736 to 742 (PIDLSKK) is interaction with CTBP. The CCHC FOG-type 4 zinc-finger motif lies at 759–792 (APLADYHECTACRISFNSLESYLAHKKFSCPTAP). Cys767, Cys770, His783, and Cys788 together coordinate Zn(2+). The segment at 869-892 (TTCPYCPHNVIIRGDLLEHFRSVH) adopts a C2H2-type 4 zinc-finger fold. The interval 917–1021 (RGQTSSASEN…MQPPKPSLIS (105 aa)) is disordered. 2 stretches are compositionally biased toward low complexity: residues 933 to 942 (VSSASPLQLP) and 954 to 972 (TTSSSSSVNGSPILTSTPR). Pro residues predominate over residues 973-984 (PLLPTSPAPPSN). A CCHC FOG-type 5 zinc finger spans residues 1023–1056 (VPNGNHRYCRLCNIKFSSLSTFIAHKKYYCSSHA). Zn(2+)-binding residues include Cys1031, Cys1034, His1047, and Cys1052.

This sequence belongs to the FOG (Friend of GATA) family. Interacts with corepressor CTBP. Interacts with the N-terminal zinc-finger of GATA1 and probably GATA2. Predominantly expressed in heart and brain. Also expressed in ventral blood island and adult spleen.

The protein localises to the nucleus. Its function is as follows. Transcription regulator that plays an central role in red blood cell differentiation. Essential cofactor that acts via the formation of a heterodimer with transcription factors of the GATA family GATA1 and GATA2. Such heterodimer can both activate or repress transcriptional activity, depending on the cell and promoter context. Acts as a repressor of red blood cells, probably by modulating activity of GATA1. In Xenopus laevis (African clawed frog), this protein is Zinc finger protein ZFPM1 (zfpm1).